The sequence spans 596 residues: Delta(24(24(1)))-sterol reductase (596 aa).

Residues 1 to 122 form a disordered region; it reads MSSRYSLRQT…GHATNGHATS (122 aa). Residues 98–112 are compositionally biased toward gly residues; that stretch reads NGNGNGYTNGHGNGN. The next 8 helical transmembrane spans lie at 168 to 188, 225 to 245, 269 to 289, 296 to 316, 353 to 373, 381 to 401, 419 to 439, and 454 to 474; these read FGTA…WIGA, VWAW…LLPG, WSLY…IWPL, FGPL…VAYF, MFFE…GTAA, YVSG…NACA, GFML…HCTI, and GILA…DSCN. Residues lysine 477, arginine 481, leucine 516, and 528 to 529 contribute to the NADP(+) site; that span reads HY. The chain crosses the membrane as a helical span at residues 535 to 557; the sequence is FAVSWGLITGFESPFPWFYPVFF. NADP(+) is bound by residues aspartate 568, 572–576, and tyrosine 583; that span reads CRRKY.

It belongs to the ERG4/ERG24 family.

It localises to the endoplasmic reticulum membrane. It catalyses the reaction ergosterol + NADP(+) = ergosta-5,7,22,24(28)-tetraen-3beta-ol + NADPH + H(+). It functions in the pathway steroid metabolism; ergosterol biosynthesis. Functionally, delta(24(24(1)))-sterol reductase; part of the third module of ergosterol biosynthesis pathway that includes the late steps of the pathway. ERG4 catalyzes the last step of ergosterol biosynthesis by converting ergosta-5,7,22,24(28)-tetraen-3beta-ol into ergosterol. The third module or late pathway involves the ergosterol synthesis itself through consecutive reactions that mainly occur in the endoplasmic reticulum (ER) membrane. Firstly, the squalene synthase ERG9 catalyzes the condensation of 2 farnesyl pyrophosphate moieties to form squalene, which is the precursor of all steroids. Squalene synthase is crucial for balancing the incorporation of farnesyl diphosphate (FPP) into sterol and nonsterol isoprene synthesis. Secondly, squalene is converted into lanosterol by the consecutive action of the squalene epoxidase ERG1 and the lanosterol synthase ERG7. Then, the delta(24)-sterol C-methyltransferase ERG6 methylates lanosterol at C-24 to produce eburicol. Eburicol is the substrate of the sterol 14-alpha demethylase encoded by CYP51A, CYP51B and CYP51C, to yield 4,4,24-trimethyl ergosta-8,14,24(28)-trienol. CYP51B encodes the enzyme primarily responsible for sterol 14-alpha-demethylation, and plays an essential role in ascospore formation. CYP51A encodes an additional sterol 14-alpha-demethylase, induced on ergosterol depletion and responsible for the intrinsic variation in azole sensitivity. The third CYP51 isoform, CYP51C, does not encode a sterol 14-alpha-demethylase, but is required for full virulence on host wheat ears. The C-14 reductase ERG24 then reduces the C14=C15 double bond which leads to 4,4-dimethylfecosterol. A sequence of further demethylations at C-4, involving the C-4 demethylation complex containing the C-4 methylsterol oxidases ERG25, the sterol-4-alpha-carboxylate 3-dehydrogenase ERG26 and the 3-keto-steroid reductase ERG27, leads to the production of fecosterol via 4-methylfecosterol. ERG28 has a role as a scaffold to help anchor ERG25, ERG26 and ERG27 to the endoplasmic reticulum. The C-8 sterol isomerase ERG2 then catalyzes the reaction which results in unsaturation at C-7 in the B ring of sterols and thus converts fecosterol to episterol. The sterol-C5-desaturases ERG3A and ERG3BB then catalyze the introduction of a C-5 double bond in the B ring to produce 5-dehydroepisterol. The C-22 sterol desaturases ERG5A and ERG5B further convert 5-dehydroepisterol into ergosta-5,7,22,24(28)-tetraen-3beta-ol by forming the C-22(23) double bond in the sterol side chain. Finally, ergosta-5,7,22,24(28)-tetraen-3beta-ol is substrate of the C-24(28) sterol reductase ERG4 to produce ergosterol. This Gibberella zeae (strain ATCC MYA-4620 / CBS 123657 / FGSC 9075 / NRRL 31084 / PH-1) (Wheat head blight fungus) protein is Delta(24(24(1)))-sterol reductase.